A 178-amino-acid polypeptide reads, in one-letter code: Large ribosomal subunit protein uL6 (178 aa).

The protein belongs to the universal ribosomal protein uL6 family. In terms of assembly, part of the 50S ribosomal subunit.

Functionally, this protein binds to the 23S rRNA, and is important in its secondary structure. It is located near the subunit interface in the base of the L7/L12 stalk, and near the tRNA binding site of the peptidyltransferase center. The protein is Large ribosomal subunit protein uL6 of Streptococcus uberis (strain ATCC BAA-854 / 0140J).